A 311-amino-acid polypeptide reads, in one-letter code: tRNA-cytidine(32) 2-sulfurtransferase (311 aa).

Positions 47 to 52 (SGGKDS) match the PP-loop motif motif. Residues Cys122, Cys125, and Cys213 each contribute to the [4Fe-4S] cluster site.

Belongs to the TtcA family. As to quaternary structure, homodimer. The cofactor is Mg(2+). It depends on [4Fe-4S] cluster as a cofactor.

It is found in the cytoplasm. The catalysed reaction is cytidine(32) in tRNA + S-sulfanyl-L-cysteinyl-[cysteine desulfurase] + AH2 + ATP = 2-thiocytidine(32) in tRNA + L-cysteinyl-[cysteine desulfurase] + A + AMP + diphosphate + H(+). Its pathway is tRNA modification. Catalyzes the ATP-dependent 2-thiolation of cytidine in position 32 of tRNA, to form 2-thiocytidine (s(2)C32). The sulfur atoms are provided by the cysteine/cysteine desulfurase (IscS) system. This is tRNA-cytidine(32) 2-sulfurtransferase from Klebsiella pneumoniae (strain 342).